The sequence spans 412 residues: STAGA complex 65 subunit gamma (412 aa).

Residues 81–107 (AQTQSQQQTEGVKAEESEPLPSCPGSP) are disordered. Residue Ser106 is modified to Phosphoserine. A Glycyl lysine isopeptide (Lys-Gly) (interchain with G-Cter in SUMO2) cross-link involves residue Lys269. Phosphoserine occurs at positions 321 and 332. A disordered region spans residues 364–412 (EEPMSGMSEAGLPQSPDDSDSSYGSHSTDSLMGSSPVFNQRCRKRMRKI). The segment covering 384–393 (SSYGSHSTDS) has biased composition (low complexity).

Component of the STAGA transcription coactivator-HAT complex, at least composed of SUPT3H, SUPT7L, GCN5L2, TAF5L, TAF6L, TADA3L, TAD1L, TAF10, TAF12 and TAF9. Sumoylated.

It is found in the nucleus. This chain is STAGA complex 65 subunit gamma (Supt7l), found in Mus musculus (Mouse).